The chain runs to 428 residues: Glutamyl-tRNA reductase (428 aa).

Residues 55–58 (TCNR), Ser114, 119–121 (ETQ), and Gln125 each bind substrate. Cys56 acts as the Nucleophile in catalysis. Residue 194-199 (GAGEMI) coordinates NADP(+).

Belongs to the glutamyl-tRNA reductase family. In terms of assembly, homodimer.

It catalyses the reaction (S)-4-amino-5-oxopentanoate + tRNA(Glu) + NADP(+) = L-glutamyl-tRNA(Glu) + NADPH + H(+). The protein operates within porphyrin-containing compound metabolism; protoporphyrin-IX biosynthesis; 5-aminolevulinate from L-glutamyl-tRNA(Glu): step 1/2. Its function is as follows. Catalyzes the NADPH-dependent reduction of glutamyl-tRNA(Glu) to glutamate 1-semialdehyde (GSA). This chain is Glutamyl-tRNA reductase, found in Paraburkholderia xenovorans (strain LB400).